Here is a 469-residue protein sequence, read N- to C-terminus: Beta-1,3-xylanase (469 aa).

The signal sequence occupies residues 1–22 (MKKLAKMISIATLGACAFSAHA). Positions 23-293 (LDGKLVPNEG…LKGFTYINAD (271 aa)) constitute a GH26 domain. The active-site Proton donor is the E138. E234 serves as the catalytic Nucleophile. The span at 352–374 (DNGGDNGGDNGGDNGGDNGGDNG) shows a compositional bias: gly residues. Residues 352-380 (DNGGDNGGDNGGDNGGDNGGDNGGTEPPE) are disordered. Residues 377 to 469 (EPPENCQDDF…NITFTTQVCN (93 aa)) are carbohydrate binding module (CBM). Intrachain disulfides connect C382–C468 and C413–C418.

It belongs to the glycosyl hydrolase 26 family.

The catalysed reaction is Random hydrolysis of (1-&gt;3)-beta-D-glycosidic linkages in (1-&gt;3)-beta-D-xylans.. With respect to regulation, completely inhibited by CuCl(2), FeCl(3), HgCl(2) and N-bromosuccinimide. Moderately inhibited by AgCl, AlCl(3), Pb(CH(3)COO)(2) and dithiothreitol. BaCl(2), CaCl(2), KCl, MgCl(2), MnCl(2), NaCl, ZnCl(2), ethylenediaminetetraacetic acid, N-ethylmaleimide, iodoacetic acid and p-chloromercuribenzoic acid have little or no effect on activity. In terms of biological role, catalyzes the hydrolysis of beta-1,3-xylan into oligosaccharides, mainly xylotriose and xylobiose with smaller amounts of xylotetraose, xylose, xylopentaose and xylohexaose. Does not hydrolyze xylobiose, p-nitrophenyl-beta-xyloside, beta-1,4-xylan, carboxymethylcellulose, curdlan, glucomannan or beta-1,4-mannan. In Alcaligenes sp, this protein is Beta-1,3-xylanase.